We begin with the raw amino-acid sequence, 319 residues long: Ubiquinone biosynthesis protein COQ9, mitochondrial (319 aa).

Residues 1–45 (MAATVAFSGVLRRAGWRLLQLRCLPVPRCRPALAPRAFRASAMQL) constitute a mitochondrion transit peptide. Positions 17 to 32 (RLLQLRCLPVPRCRPA) match the SIFI-degron motif. The tract at residues 46–99 (RSLDQQKDQPPPSSSQQQSEAQGAEEPNPEALRSPPRYTDQGGEEEEDYESEEQ) is disordered. The span at 87-98 (GGEEEEDYESEE) shows a compositional bias: acidic residues. Lys-176 is modified (N6-acetyllysine). Position 245 (Arg-245) interacts with a 1,2-diacylglycero-3-phosphoethanolamine.

This sequence belongs to the COQ9 family. As to quaternary structure, homodimer. Heterodimer; two heterodimers of COQ7:COQ9 come together on the same side of the lipid pseudo-bilayer and form a curved tetramer with a hydrophobic surface suitable for membrane interaction. These two tetramers assemble into a soluble octamer with a pseudo-bilayer of lipids captured within. Interacts with COQ7; this interaction allows ubiquinone (CoQ) isoprene intermediates presentation to COQ7 and facilitates the COQ7-mediated hydroxylase step. Post-translationally, in response to mitochondrial stress, the precursor protein is ubiquitinated by the SIFI complex in the cytoplasm before mitochondrial import, leading to its degradation. Within the SIFI complex, UBR4 initiates ubiquitin chain that are further elongated or branched by KCMF1.

The protein localises to the mitochondrion. The protein operates within cofactor biosynthesis; ubiquinone biosynthesis. Functionally, membrane-associated protein that warps the membrane surface to access and bind aromatic isoprenes with high specificity, including ubiquinone (CoQ) isoprene intermediates and presents them directly to COQ7, therefore facilitating the COQ7-mediated hydroxylase step. Participates in the biosynthesis of coenzyme Q, also named ubiquinone, an essential lipid-soluble electron transporter for aerobic cellular respiration. The polypeptide is Ubiquinone biosynthesis protein COQ9, mitochondrial (Bos taurus (Bovine)).